The following is a 398-amino-acid chain: GTP cyclohydrolase-2 (398 aa).

The unknown stretch occupies residues 1–172 (MNTPTHTHPH…TAAACASTTE (172 aa)). The tract at residues 173–398 (YELVTRTPVP…VKPIAKTGHA (226 aa)) is GTP cyclohydrolase II. Residue 220–224 (RVHSS) participates in GTP binding. Residues C225, C236, and C238 each coordinate Zn(2+). Residues Q241, 263–265 (EGR), and T285 contribute to the GTP site. The Proton acceptor role is filled by D297. R299 functions as the Nucleophile in the catalytic mechanism. S320 and K325 together coordinate GTP. The segment at 375 to 398 (QRPQDPSETVDGETVKPIAKTGHA) is disordered.

The protein in the C-terminal section; belongs to the GTP cyclohydrolase II family. It depends on Zn(2+) as a cofactor.

It catalyses the reaction GTP + 4 H2O = 2,5-diamino-6-hydroxy-4-(5-phosphoribosylamino)-pyrimidine + formate + 2 phosphate + 3 H(+). It functions in the pathway cofactor biosynthesis; riboflavin biosynthesis; 5-amino-6-(D-ribitylamino)uracil from GTP: step 1/4. In terms of biological role, catalyzes the conversion of GTP to 2,5-diamino-6-ribosylamino-4(3H)-pyrimidinone 5'-phosphate (DARP), formate and pyrophosphate. In Xylella fastidiosa (strain Temecula1 / ATCC 700964), this protein is GTP cyclohydrolase-2 (ribA).